The sequence spans 122 residues: Small ribosomal subunit protein bS16 (122 aa).

A disordered region spans residues Gly81–Glu122. Positions Met83–Lys110 are enriched in basic and acidic residues. Positions Ala111–Glu122 are enriched in low complexity.

The protein belongs to the bacterial ribosomal protein bS16 family.

In Xanthobacter autotrophicus (strain ATCC BAA-1158 / Py2), this protein is Small ribosomal subunit protein bS16.